Consider the following 258-residue polypeptide: Short-chain dehydrogenase chyC (258 aa).

NADP(+)-binding residues include Arg-37, Asp-55, Asn-81, Tyr-154, Lys-158, Val-185, and Thr-187. Tyr-154 functions as the Proton donor in the catalytic mechanism. Catalysis depends on Lys-158, which acts as the Lowers pKa of active site Tyr.

It belongs to the short-chain dehydrogenases/reductases (SDR) family.

In terms of biological role, short-chain dehydrogenase; part of the gene cluster that mediates the biosynthesis of the yellow pigment chrysogine. the NRPS chyA mediates the condensation of anthranilic acid and alanine into the intermediate 2-(2-aminopropanamido)benzoic acid. The remainder of the pathway is highly branched yielding at least 13 chrysogine-related compounds. The malonyl transferase chyE converts 2-(2-aminopropanamido)benzoic acid and 2-(2-aminopropanamido)benzamidine into 2-(2-(2-carboxyacetamido)propanamido)benzoic acid and 3-((1-((2-carbamoylphenyl)amino)-1-oxopropan-2-yl)amino)-3-oxopropanoic acid, respectively. ChyD is an amidase, being responsible for the amidation of the carboxylic acid moiety of 2-(2-aminopropanamido)benzoic acid, 2-(2-(2-carboxyacetamido)propanamido)benzoic acid and 2-(2-((4-amino-1-carboxy-4-oxobutyl)amino)propanamido)benzoic acid. ChyC is involved in the same reactions as ChyD, but plays a more minor role in the amidation reactions compared to chyD. The oxidoreductases chyH and chyM are involved in oxidation reactions that form N-pyruvoylanthranilamide from 2-(2-aminopropanamido)benzamidine and (1-((2-carbamoylphenyl)amino)-1-oxopropan-2-yl)glutamine, respectively. N-pyruvoylanthranilamide is further converted via two further branches in the pathway, yielding chrysogine and additional chrysogine-related coumpounds. Chrysogine is likely formed by a spontaneous ring closure from N-pyruvoylanthranilamide. The chain is Short-chain dehydrogenase chyC from Penicillium rubens (strain ATCC 28089 / DSM 1075 / NRRL 1951 / Wisconsin 54-1255) (Penicillium chrysogenum).